An 89-amino-acid polypeptide reads, in one-letter code: Putative defensin-like protein 89 (89 aa).

Positions 1 to 25 (MGFKNNLSLVSVMVFALILLPMISG) are cleaved as a signal peptide. Intrachain disulfides connect Cys30-Cys66, Cys36-Cys57, Cys42-Cys64, and Cys46-Cys65.

The protein belongs to the DEFL family.

It localises to the secreted. The sequence is that of Putative defensin-like protein 89 from Arabidopsis thaliana (Mouse-ear cress).